We begin with the raw amino-acid sequence, 387 residues long: Phosphoglycerate kinase (387 aa).

Residues 21–23 (DLN), arginine 36, 59–62 (HLGR), arginine 113, and arginine 146 each bind substrate. ATP is bound by residues lysine 197, glutamate 314, and 340 to 343 (GGDT).

The protein belongs to the phosphoglycerate kinase family. Monomer.

Its subcellular location is the cytoplasm. It catalyses the reaction (2R)-3-phosphoglycerate + ATP = (2R)-3-phospho-glyceroyl phosphate + ADP. Its pathway is carbohydrate degradation; glycolysis; pyruvate from D-glyceraldehyde 3-phosphate: step 2/5. The protein is Phosphoglycerate kinase of Pseudomonas fluorescens (strain Pf0-1).